Reading from the N-terminus, the 347-residue chain is Gibberellin 3-beta-dioxygenase 2 (347 aa).

Positions Asp-197–Pro-301 constitute a Fe2OG dioxygenase domain. Residues His-225, Asp-227, and His-282 each contribute to the Fe cation site. The active site involves Arg-292. Arg-292 provides a ligand contact to 2-oxoglutarate.

It belongs to the iron/ascorbate-dependent oxidoreductase family. GA3OX subfamily. Requires L-ascorbate as cofactor. Fe(2+) is required as a cofactor. In terms of tissue distribution, highly expressed in seedlings but also expressed in roots, leaves, stems, flowers, siliques and seeds. Detected predominantly in the hypocotyl and roots of young seedlings and in the petioles and vasculature of leaves. Not expressed in the shoot apical meristem, but found in the elongation zone, the quiescent center cells and the columella cells of the root tips. Found in the cortex and the endodermis of the embryo axis in germinating seeds.

The catalysed reaction is gibberellin A20 + 2-oxoglutarate + O2 = gibberellin A1 + succinate + CO2. It functions in the pathway plant hormone biosynthesis; gibberellin biosynthesis. Its function is as follows. Converts the inactive gibberellin (GA) precursors GA9 and GA20 in the bioactives gibberellins GA4 and GA1. Involved in the production of bioactive GA for vegetative growth and development. The protein is Gibberellin 3-beta-dioxygenase 2 of Arabidopsis thaliana (Mouse-ear cress).